The chain runs to 154 residues: Myoglobin (154 aa).

Positions 2-148 (GLSDDEWNHV…FRNDMASKYK (147 aa)) constitute a Globin domain. Nitrite is bound at residue His65. His65 contacts O2. Residue His94 coordinates heme b.

This sequence belongs to the globin family. In terms of assembly, monomeric.

Its subcellular location is the cytoplasm. It localises to the sarcoplasm. The enzyme catalyses Fe(III)-heme b-[protein] + nitric oxide + H2O = Fe(II)-heme b-[protein] + nitrite + 2 H(+). It carries out the reaction H2O2 + AH2 = A + 2 H2O. Functionally, monomeric heme protein which primary function is to store oxygen and facilitate its diffusion within muscle tissues. Reversibly binds oxygen through a pentacoordinated heme iron and enables its timely and efficient release as needed during periods of heightened demand. Depending on the oxidative conditions of tissues and cells, and in addition to its ability to bind oxygen, it also has a nitrite reductase activity whereby it regulates the production of bioactive nitric oxide. Under stress conditions, like hypoxia and anoxia, it also protects cells against reactive oxygen species thanks to its pseudoperoxidase activity. In Chelonia mydas (Green sea-turtle), this protein is Myoglobin (MB).